Consider the following 110-residue polypeptide: Large ribosomal subunit protein uL22 (110 aa).

It belongs to the universal ribosomal protein uL22 family. In terms of assembly, part of the 50S ribosomal subunit.

Its function is as follows. This protein binds specifically to 23S rRNA; its binding is stimulated by other ribosomal proteins, e.g. L4, L17, and L20. It is important during the early stages of 50S assembly. It makes multiple contacts with different domains of the 23S rRNA in the assembled 50S subunit and ribosome. The globular domain of the protein is located near the polypeptide exit tunnel on the outside of the subunit, while an extended beta-hairpin is found that lines the wall of the exit tunnel in the center of the 70S ribosome. This chain is Large ribosomal subunit protein uL22, found in Citrobacter koseri (strain ATCC BAA-895 / CDC 4225-83 / SGSC4696).